The primary structure comprises 207 residues: Small ribosomal subunit protein uS4 (207 aa).

Positions 31–55 are disordered; it reads KCKLDSKPGQHGRTSGARTSDYGTQ. A compositionally biased stretch (polar residues) spans 42-53; the sequence is GRTSGARTSDYG. The S4 RNA-binding domain maps to 97–160; it reads SRLDNVVYRM…KKQARIIEAL (64 aa).

This sequence belongs to the universal ribosomal protein uS4 family. In terms of assembly, part of the 30S ribosomal subunit. Contacts protein S5. The interaction surface between S4 and S5 is involved in control of translational fidelity.

In terms of biological role, one of the primary rRNA binding proteins, it binds directly to 16S rRNA where it nucleates assembly of the body of the 30S subunit. Functionally, with S5 and S12 plays an important role in translational accuracy. In Burkholderia vietnamiensis (strain G4 / LMG 22486) (Burkholderia cepacia (strain R1808)), this protein is Small ribosomal subunit protein uS4.